The sequence spans 316 residues: Methionyl-tRNA formyltransferase (316 aa).

112 to 115 (SLLP) contributes to the (6S)-5,6,7,8-tetrahydrofolate binding site.

Belongs to the Fmt family.

It catalyses the reaction L-methionyl-tRNA(fMet) + (6R)-10-formyltetrahydrofolate = N-formyl-L-methionyl-tRNA(fMet) + (6S)-5,6,7,8-tetrahydrofolate + H(+). Attaches a formyl group to the free amino group of methionyl-tRNA(fMet). The formyl group appears to play a dual role in the initiator identity of N-formylmethionyl-tRNA by promoting its recognition by IF2 and preventing the misappropriation of this tRNA by the elongation apparatus. This Actinobacillus pleuropneumoniae serotype 5b (strain L20) protein is Methionyl-tRNA formyltransferase.